A 172-amino-acid polypeptide reads, in one-letter code: MSKEKEVLLNEEIRADEIRCVGDDGKVYGIISSDEALEIANRLGLDLVMIAADAKPPVCKIMDYGKFRYQQEKKQKEAKKKQKVIDIKEIKLSVKIAQNDINYKVKHALEFLEQGKHVRFRVFLKGREMATPEAGVALLEKIWTMIENEANRDKEPNFEGRYVNMLVTPKKA.

The protein belongs to the IF-3 family. Monomer.

Its subcellular location is the cytoplasm. IF-3 binds to the 30S ribosomal subunit and shifts the equilibrium between 70S ribosomes and their 50S and 30S subunits in favor of the free subunits, thus enhancing the availability of 30S subunits on which protein synthesis initiation begins. This is Translation initiation factor IF-3 from Campylobacter jejuni subsp. jejuni serotype O:6 (strain 81116 / NCTC 11828).